A 231-amino-acid chain; its full sequence is L-ribulose-5-phosphate 4-epimerase SgbE (231 aa).

Substrate is bound by residues 27 to 28, 44 to 45, and 74 to 75; these read GN, SG, and SS. Zn(2+)-binding residues include Asp76, His95, and His97. Residue Asp120 is the Proton donor/acceptor of the active site. Zn(2+) is bound at residue His171. Tyr229 serves as the catalytic Proton donor/acceptor.

Belongs to the aldolase class II family. AraD/FucA subfamily. It depends on Zn(2+) as a cofactor.

The enzyme catalyses L-ribulose 5-phosphate = D-xylulose 5-phosphate. Its function is as follows. Catalyzes the interconversion of L-ribulose 5-phosphate (LRu5P) and D-xylulose 5-phosphate (D-Xu5P) via a retroaldol/aldol mechanism (carbon-carbon bond cleavage analogous to a class II aldolase reaction). May be involved in the utilization of 2,3-diketo-L-gulonate. The polypeptide is L-ribulose-5-phosphate 4-epimerase SgbE (Escherichia coli (strain K12)).